Reading from the N-terminus, the 364-residue chain is Fructose-bisphosphate aldolase, non-muscle type (364 aa).

Substrate is bound by residues arginine 56 and lysine 147. Lysine 230 (schiff-base intermediate with dihydroxyacetone-P) is an active-site residue.

It belongs to the class I fructose-bisphosphate aldolase family. Homotetramer. Expressed mainly in the liver and also in brain and other tissues, except for the heart muscle.

It catalyses the reaction beta-D-fructose 1,6-bisphosphate = D-glyceraldehyde 3-phosphate + dihydroxyacetone phosphate. The protein operates within carbohydrate degradation; glycolysis; D-glyceraldehyde 3-phosphate and glycerone phosphate from D-glucose: step 4/4. This chain is Fructose-bisphosphate aldolase, non-muscle type, found in Lethenteron camtschaticum (Japanese lamprey).